The primary structure comprises 591 residues: MAEHDAPPESGAARSPPAKKRGGDARSPQQDAQPLSSRDRVRERDEDKDRERHRRHGEDRERYRDRESVRERGEGSRDRERHRREHREESRDRERHHREHREGSRDRERHHREHREGSRDRERHHREHREGSRDRERHHRDHREGSRDRERHHRDHRERSERREHRDRSDDRDYRRSCDRDAERRDRDRDGHRRHRSRSPLRSESQSKRMSGFDQRPSEAIPILAPDATPSQLPELPAANPGMFPNMLPNLVNVPALGQPLAMTQQATRHARRVYVGGLPPIANEQTVAVFFNQVMAAIGGNTFALGHAVVNVYINHDKKFAFVEMRSVEEASNAMALDGIMFEGAPVKVRRPTDYNPSQAAALGPSQPNPNLNLAAVGLTPGAGGGLEGPDRIFVGGLPYYFTEAQVRELLETFGPLRGFDIVKDKETGNSKGYAFCLYKDGTVTDIACAALNGIQLGDRTLTVRRANQGAEPRPEQENILLQAQQEAQMKRLVYEVGRTLTTKVVCLTQVVSADDLRDDEEYNDILEDMTLEGHKYVPHSTIAESFIIRPHAKFAIRPKLTEDTNLFHLDLTNHMFSSLPFCHVHVCSY.

The disordered stretch occupies residues 1–215 (MAEHDAPPES…QSKRMSGFDQ (215 aa)). The segment covering 27–36 (SPQQDAQPLS) has biased composition (polar residues). Basic and acidic residues-rich tracts occupy residues 37 to 79 (SRDR…SRDR) and 157 to 191 (RERS…DRDG). 2 consecutive RRM domains span residues 272–355 (RRVY…RPTD) and 392–470 (DRIF…RANQ).

It belongs to the splicing factor SR family.

It is found in the nucleus. In terms of biological role, necessary for the splicing of pre-mRNA. The chain is Splicing factor U2af large subunit A (U2AF65A) from Triticum aestivum (Wheat).